The chain runs to 98 residues: Large ribosomal subunit protein uL23 (98 aa).

This sequence belongs to the universal ribosomal protein uL23 family. In terms of assembly, part of the 50S ribosomal subunit. Contacts protein L29, and trigger factor when it is bound to the ribosome.

In terms of biological role, one of the early assembly proteins it binds 23S rRNA. One of the proteins that surrounds the polypeptide exit tunnel on the outside of the ribosome. Forms the main docking site for trigger factor binding to the ribosome. This chain is Large ribosomal subunit protein uL23, found in Acidothermus cellulolyticus (strain ATCC 43068 / DSM 8971 / 11B).